We begin with the raw amino-acid sequence, 489 residues long: MEEGKMDENEWSYHGEGNKSLVVAHAQRCVVLRFLKFPPNKKKTSEEILQHLQNIVDFGKNVMKDFLGENYVHCGEVVQLPLEFVKQLCLKIQCERPESRCDKDLDTLSGYAMCLPNLTRLQTFPFAEHRPILCVEIKPKCGFIPFSNGVTHEMKHKVCRYCMHQHLKVATGKWKKISKYCPLDLYSGNKQRMHFALKSLLQEAQNNLRIFKNGELIYGCADARSPVADLKALAHHLKPFFFPSNGLASGPQCTRAVIRELVHVITRVLLSTSDKGRAGALRLGLQGARVCEASPFSRSLHHQGKNTPEHSGLPKGCLLYKTLQVQMLDQLDIEGLYPLYNRVEQYLEEFPEERKTLQIDGPYDEVFYQKLLDLSTEDDGTVAFALTKVQQYRVAMTAKDCSIMIALSPCLQGASSDQRPVIPSSRSRLAFSVSVLDLDLKPYESIPHQYKLDSKIVSYYSKTVHAKDDTVRSTRFKEHEDCTLVLHKV.

An EXKPK motif motif is present at residues 136–140; that stretch reads EIKPK.

It belongs to the IPK1 type 2 family.

The protein resides in the cytoplasm. It is found in the nucleus. It catalyses the reaction 1D-myo-inositol 1,3,4,5,6-pentakisphosphate + ATP = 1D-myo-inositol hexakisphosphate + ADP + H(+). Its function is as follows. Phosphorylates Ins(1,3,4,5,6)P5 at position 2 to form Ins(1,2,3,4,5,6)P6 (InsP6 or phytate). InsP6 is involved in many processes such as mRNA export, non-homologous end-joining, endocytosis, ion channel regulation. It also protects cells from TNF-alpha-induced apoptosis. This chain is Inositol-pentakisphosphate 2-kinase (Ippk), found in Rattus norvegicus (Rat).